Reading from the N-terminus, the 1668-residue chain is Probable histone acetyltransferase HAC-like 1 (1668 aa).

Disordered stretches follow at residues 1-34 (MNVG…ADGL), 459-493 (QQQP…SEQG), and 528-551 (KGGQ…HDSQ). Residues 11–23 (GQMSGQAPQTNQV) show a composition bias toward polar residues. Residues 459 to 469 (QQQPNSQHQQS) show a composition bias toward low complexity. Composition is skewed to polar residues over residues 470–491 (ILRS…QLSE) and 536–551 (LSSS…HDSQ). The TAZ-type 1 zinc finger occupies 651 to 732 (AAGNIYYFRQ…DLQCPVCSNA (82 aa)). Basic and acidic residues predominate over residues 886 to 899 (KETSETAPEVKNEA). Residues 886-912 (KETSETAPEVKNEANDSTDITVSKSGK) form a disordered region. Residues 900 to 909 (NDSTDITVSK) are compositionally biased toward polar residues. A PHD-type zinc finger spans residues 1002–1079 (HFFCIPCYNE…EYTCPNCYVE (78 aa)). The 437-residue stretch at 1094 to 1530 (VLGAKDLPRT…VLYHLHNPTA (437 aa)) folds into the CBP/p300-type HAT domain. Acetyl-CoA-binding positions include 1217 to 1219 (LDS), 1236 to 1237 (RT), and W1292. Positions 1342-1365 (GAAEDMINQLRQEEDDRKQQKKGK) form a coiled coil. A ZZ-type zinc finger spans residues 1412-1475 (HLQYSCSHCC…TLHPVDIVGL (64 aa)). 8 residues coordinate Zn(2+): C1417, C1420, C1432, C1435, C1441, C1444, H1457, and H1465. A TAZ-type 2 zinc finger spans residues 1553–1634 (EVCPDFDLRK…GCNVPRCRDL (82 aa)). Residues 1630-1650 (RCRDLKEHLRRLQQQSDSRRR) adopt a coiled-coil conformation.

Its subcellular location is the nucleus. The catalysed reaction is L-lysyl-[protein] + acetyl-CoA = N(6)-acetyl-L-lysyl-[protein] + CoA + H(+). Acetyltransferase enzyme. Acetylates histones, giving a specific tag for transcriptional activation. The polypeptide is Probable histone acetyltransferase HAC-like 1 (Oryza sativa subsp. japonica (Rice)).